The following is a 688-amino-acid chain: Zinc finger and BTB domain-containing protein 48 (688 aa).

In terms of domain architecture, BTB spans 26–89 (CDATLDVGGL…FYTGHLALTS (64 aa)). The tract at residues 119 to 140 (SVGQAAGGQSGLGPPASQNVNS) is disordered. A Glycyl lysine isopeptide (Lys-Gly) (interchain with G-Cter in SUMO2) cross-link involves residue Lys143. Residues 161 to 192 (PRDQEPRGSHSPQRPQLHSPAQSEGPSSLCGK) are disordered. 3 positions are modified to phosphoserine: Ser169, Ser171, and Ser179. The span at 170 to 186 (HSPQRPQLHSPAQSEGP) shows a compositional bias: polar residues. Residue Lys263 forms a Glycyl lysine isopeptide (Lys-Gly) (interchain with G-Cter in SUMO2) linkage. The C2H2-type 1 zinc-finger motif lies at 291–313 (VECPTCHKKFLSKYYLKVHNRKH). Positions 293, 296, 309, 313, 321, 324, 337, 342, 352, 355, 368, 372, 380, 383, 396, and 401 each coordinate Zn(2+). A CCHC-type zinc finger spans residues 319-344 (FECPKCGKCYFRKENLLEHEARNCMN). C2H2-type zinc fingers lie at residues 350-372 (FTCS…MVSH), 378-401 (YKCS…IKLH), 407-430 (HACP…AFKH), 436-459 (FVCE…KAKH), 465-487 (HVCE…LRTH), 493-515 (FQCH…NRTH), 521-544 (FSCE…ASRH), 550-572 (HFCQ…VRRH), and 578-600 (FECT…MEIH). 7 residues coordinate Zn(2+): Cys552, Cys555, His568, Cys580, Cys583, His596, and His600.

It belongs to the krueppel C2H2-type zinc-finger protein family. As to quaternary structure, interacts with EP300. In terms of tissue distribution, detected in adrenal gland and neuroblastoma.

It localises to the nucleus. It is found in the chromosome. The protein resides in the telomere. Functionally, plays a critical role in transcriptional regulation and chromatin remodeling. Acts as a regulator of telomere length. Directly binds the telomeric double-stranded 5'-TTAGGG-3' repeat. Preferentially binds to telomeres that have a low concentration of shelterin complex and acts as a regulator of telomere length by initiating telomere trimming, a process that prevents the accumulation of aberrantly long telomeres. Also acts as a transcription regulator that binds to promoter regions. Regulates expression of a small subset of genes, including MTFP1. Acts as a negative regulator of cell proliferation by specifically activating expression of ARF, a tumor suppressor isoform of CDKN2A. Acts as a transcription regulator of CIITA, the major factor regulating MHC class II gene expression. In addition, regulates cellular m6A/m6Am methylation on RNA by facilitating the recruitment of the RNA demethylase, FTO, to target mRNAs. The protein is Zinc finger and BTB domain-containing protein 48 of Homo sapiens (Human).